The following is a 146-amino-acid chain: Protein MGF 100-3L (146 aa).

This sequence belongs to the asfivirus MGF 100 family.

In terms of biological role, plays a role in virus cell tropism, and may be required for efficient virus replication in macrophages. This chain is Protein MGF 100-3L, found in Ornithodoros (relapsing fever ticks).